Reading from the N-terminus, the 301-residue chain is Porphobilinogen deaminase (301 aa).

Cys-242 bears the S-(dipyrrolylmethanemethyl)cysteine mark.

It belongs to the HMBS family. As to quaternary structure, monomer. It depends on dipyrromethane as a cofactor.

The catalysed reaction is 4 porphobilinogen + H2O = hydroxymethylbilane + 4 NH4(+). Its pathway is porphyrin-containing compound metabolism; protoporphyrin-IX biosynthesis; coproporphyrinogen-III from 5-aminolevulinate: step 2/4. In terms of biological role, tetrapolymerization of the monopyrrole PBG into the hydroxymethylbilane pre-uroporphyrinogen in several discrete steps. This Rickettsia canadensis (strain McKiel) protein is Porphobilinogen deaminase.